We begin with the raw amino-acid sequence, 476 residues long: Bifunctional protein HldE (476 aa).

The segment at 1–318 is ribokinase; it reads MFQYSAEFKQ…ENAIHGRSNT (318 aa). Residue 195-198 participates in ATP binding; that stretch reads NMSE. Residue Asp264 is part of the active site. The interval 344–476 is cytidylyltransferase; the sequence is MTNGCFDILH…VISKIQQLKD (133 aa).

It in the N-terminal section; belongs to the carbohydrate kinase PfkB family. The protein in the C-terminal section; belongs to the cytidylyltransferase family. As to quaternary structure, homodimer.

It carries out the reaction D-glycero-beta-D-manno-heptose 7-phosphate + ATP = D-glycero-beta-D-manno-heptose 1,7-bisphosphate + ADP + H(+). It catalyses the reaction D-glycero-beta-D-manno-heptose 1-phosphate + ATP + H(+) = ADP-D-glycero-beta-D-manno-heptose + diphosphate. It participates in nucleotide-sugar biosynthesis; ADP-L-glycero-beta-D-manno-heptose biosynthesis; ADP-L-glycero-beta-D-manno-heptose from D-glycero-beta-D-manno-heptose 7-phosphate: step 1/4. Its pathway is nucleotide-sugar biosynthesis; ADP-L-glycero-beta-D-manno-heptose biosynthesis; ADP-L-glycero-beta-D-manno-heptose from D-glycero-beta-D-manno-heptose 7-phosphate: step 3/4. The protein operates within bacterial outer membrane biogenesis; LPS core biosynthesis. Catalyzes the phosphorylation of D-glycero-D-manno-heptose 7-phosphate at the C-1 position to selectively form D-glycero-beta-D-manno-heptose-1,7-bisphosphate. Functionally, catalyzes the ADP transfer from ATP to D-glycero-beta-D-manno-heptose 1-phosphate, yielding ADP-D-glycero-beta-D-manno-heptose. This chain is Bifunctional protein HldE, found in Pasteurella multocida (strain Pm70).